The following is a 488-amino-acid chain: Transmembrane protein 39A (488 aa).

Residues asparagine 31 and asparagine 39 are each glycosylated (N-linked (GlcNAc...) asparagine). Helical transmembrane passes span 72 to 92 (GLLF…IQYI), 110 to 130 (TSLN…VMLA), and 155 to 175 (LITA…WTLV). The N-linked (GlcNAc...) asparagine glycan is linked to asparagine 180. A run of 5 helical transmembrane segments spans residues 182–202 (SVLN…LCCF), 287–307 (EVLF…LCFV), 319–339 (CEHL…QLLP), 420–440 (LLNL…YSLL), and 446–466 (NHTL…FKLL).

This sequence belongs to the TMEM39 family.

The protein localises to the endoplasmic reticulum membrane. Its function is as follows. Regulates autophagy by controlling the spatial distribution and levels of the intracellular phosphatidylinositol 4-phosphate (PtdIns(4)P) pools. Modulates (PtdIns(4)P) levels by regulating the ER-to-Golgi trafficking of the phosphatidylinositide phosphatase SACM1L. The sequence is that of Transmembrane protein 39A (tmem39a) from Xenopus tropicalis (Western clawed frog).